Here is a 919-residue protein sequence, read N- to C-terminus: DNA double-strand break repair Rad50 ATPase (919 aa).

ATP contacts are provided by residues 33-39 and Q143; that span reads NGAGKST. 3 coiled-coil regions span residues 208-268, 315-379, and 414-458; these read MTLR…MLVN, HEVA…RRYT, and ESVL…LEES. Positions 417 to 516 constitute a Zinc-hook domain; the sequence is LERLDAVIND…EASRLQDKRR (100 aa). Residues C464 and C467 each contribute to the Zn(2+) site. Coiled-coil stretches lie at residues 486–515, 541–595, and 635–749; these read EAER…QDKR, EDLA…LQRL, and AYRS…RKAS.

Belongs to the SMC family. RAD50 subfamily. In terms of assembly, homodimer. Forms a heterotetramer composed of two Mre11 subunits and two Rad50 subunits. Requires Zn(2+) as cofactor.

In terms of biological role, part of the Rad50/Mre11 complex, which is involved in the early steps of DNA double-strand break (DSB) repair. The complex may facilitate opening of the processed DNA ends to aid in the recruitment of HerA and NurA. Rad50 controls the balance between DNA end bridging and DNA resection via ATP-dependent structural rearrangements of the Rad50/Mre11 complex. The polypeptide is DNA double-strand break repair Rad50 ATPase (Aeropyrum pernix (strain ATCC 700893 / DSM 11879 / JCM 9820 / NBRC 100138 / K1)).